A 2563-amino-acid polypeptide reads, in one-letter code: Compactin diketide synthase mlcB (2563 aa).

A Ketosynthase family 3 (KS3) domain is found at 29-450 (STPIAIVGMG…GSNAHVILES (422 aa)). Residues C202, H337, and H372 each act as for beta-ketoacyl synthase activity in the active site. The interval 568–915 (VFTGQGAQWH…TELISKGYGL (348 aa)) is acyl and malonyl transferase. Residue S658 is the For malonyltransferase activity of the active site. A compositionally biased stretch (basic and acidic residues) spans 951 to 960 (EPRGSRESKQ). Residues 951-971 (EPRGSRESKQRTHPPHTLIGS) form a disordered region. The segment at 966-1103 (HTLIGSRESL…GLIRSESERS (138 aa)) is N-terminal hotdog fold. The PKS/mFAS DH domain occupies 966 to 1284 (HTLIGSRESL…FQSVGSSFSD (319 aa)). The active-site Proton acceptor; for dehydratase activity is H998. The segment at 998–1010 (HVVGSSIIFPGAG) is dehydratase-like. The segment at 1121–1284 (DNRSIDPNDL…FQSVGSSFSD (164 aa)) is C-terminal hotdog fold. Residue D1187 is the Proton donor; for dehydratase activity of the active site. Residues 1542 to 1579 (YDVVVACQVLHATRCMKRTLSNVRKLLKPGGNLILVET) form a methyltransferase region. The region spanning 2485 to 2562 (EAISIVLKAM…GLVELVVAKC (78 aa)) is the Carrier domain. Position 2522 is an O-(pantetheine 4'-phosphoryl)serine (S2522).

It depends on pantetheine 4'-phosphate as a cofactor.

It carries out the reaction holo-[2-methylbutanoate polyketide synthase] + 2 malonyl-CoA + S-adenosyl-L-methionine + 2 NADPH + 3 H(+) = (S)-2-methylbutanoyl-[2-methylbutanoate polyketide synthase] + S-adenosyl-L-homocysteine + 2 CO2 + 2 NADP(+) + 2 CoA + H2O. Its pathway is polyketide biosynthesis. Diketide synthase; part of the gene cluster that mediates the biosynthesis of compactin, also known as mevastatin or ML-236B, and which acts as a potent competitive inhibitor of HMG-CoA reductase. Compactin biosynthesis is performed in two stages. The first stage is catalyzed by the nonaketide synthase mlcA, which belongs to type I polyketide synthases and catalyzes the iterative nine-step formation of the polyketide. This PKS stage is completed by the action of dehydrogenase mlcG, which catalyzes the NADPH-dependent reduction of the unsaturated tetra-, penta- and heptaketide intermediates that arise during the mlcA-mediated biosynthesis of the nonaketide chain and leads to dihydro-ML-236C carboxylate. Covalently bound dihydro-ML-236C carboxylate is released from mlcA by the mlcF esterase. Conversion of dihydro-ML-236C carboxylate into ML-236A carboxylate is subsequently performed with the participation of molecular oxygen and P450 monoogygenase mlcC. Finally, mlcH performs the conversion of ML-236A carboxylate to ML-236B/compactin carboxylate through the addition of the side-chain diketide moiety produced by the diketide synthase mlcB. The sequence is that of Compactin diketide synthase mlcB (mlcB) from Penicillium citrinum.